We begin with the raw amino-acid sequence, 141 residues long: MGRVRTKTVKKSSRQVIEKYYSRMTLDFHTNKKILEEVAIIPSKRLRNKIAGFSTHLMKRIQKGPVRGISLKLQEEERERRMDFVPDESAIKTDEIKVDKETLEMLASLGMSDTPGISAVEPQQAMAPIAAFGGGRAPRRY.

The protein belongs to the eukaryotic ribosomal protein eS17 family.

This Arabidopsis thaliana (Mouse-ear cress) protein is Small ribosomal subunit protein eS17w (RPS17D).